Consider the following 212-residue polypeptide: Phosphoribosylformylglycinamidine synthase subunit PurQ (212 aa).

The 211-residue stretch at 2–212 (RIAVLKFPGT…WLGLISWLRR (211 aa)) folds into the Glutamine amidotransferase type-1 domain. C85 acts as the Nucleophile in catalysis. Active-site residues include H183, E185, and H191.

In terms of assembly, part of the FGAM synthase complex composed of 1 PurL, 1 PurQ and 2 PurS subunits.

It localises to the cytoplasm. The enzyme catalyses N(2)-formyl-N(1)-(5-phospho-beta-D-ribosyl)glycinamide + L-glutamine + ATP + H2O = 2-formamido-N(1)-(5-O-phospho-beta-D-ribosyl)acetamidine + L-glutamate + ADP + phosphate + H(+). The catalysed reaction is L-glutamine + H2O = L-glutamate + NH4(+). It functions in the pathway purine metabolism; IMP biosynthesis via de novo pathway; 5-amino-1-(5-phospho-D-ribosyl)imidazole from N(2)-formyl-N(1)-(5-phospho-D-ribosyl)glycinamide: step 1/2. Functionally, part of the phosphoribosylformylglycinamidine synthase complex involved in the purines biosynthetic pathway. Catalyzes the ATP-dependent conversion of formylglycinamide ribonucleotide (FGAR) and glutamine to yield formylglycinamidine ribonucleotide (FGAM) and glutamate. The FGAM synthase complex is composed of three subunits. PurQ produces an ammonia molecule by converting glutamine to glutamate. PurL transfers the ammonia molecule to FGAR to form FGAM in an ATP-dependent manner. PurS interacts with PurQ and PurL and is thought to assist in the transfer of the ammonia molecule from PurQ to PurL. The chain is Phosphoribosylformylglycinamidine synthase subunit PurQ from Pyrobaculum aerophilum (strain ATCC 51768 / DSM 7523 / JCM 9630 / CIP 104966 / NBRC 100827 / IM2).